A 315-amino-acid chain; its full sequence is uncharacterized protein (315 aa).

This sequence belongs to the carbohydrate kinase PfkB family.

This is an uncharacterized protein from Escherichia coli (strain K12).